Consider the following 338-residue polypeptide: tRNA (cytidine(56)-2'-O)-methyltransferase (338 aa).

Residues L79 and 105–109 (GSEKV) each bind S-adenosyl-L-methionine. Positions 188–295 (LINHVKSVKE…VAHADNLFAG (108 aa)) constitute an HD domain.

The protein belongs to the aTrm56 family. In terms of assembly, homodimer.

The protein resides in the cytoplasm. It catalyses the reaction cytidine(56) in tRNA + S-adenosyl-L-methionine = 2'-O-methylcytidine(56) in tRNA + S-adenosyl-L-homocysteine + H(+). Specifically catalyzes the AdoMet-dependent 2'-O-ribose methylation of cytidine at position 56 in tRNAs. The sequence is that of tRNA (cytidine(56)-2'-O)-methyltransferase from Thermoplasma volcanium (strain ATCC 51530 / DSM 4299 / JCM 9571 / NBRC 15438 / GSS1).